The following is a 62-amino-acid chain: uncharacterized protein (62 aa).

4Fe-4S ferredoxin-type domains follow at residues 2-31 (AVTI…EIEG) and 32-62 (DKVV…VEPE). Positions 10, 15, 18, 22, 42, 45, 48, and 52 each coordinate [4Fe-4S] cluster.

[4Fe-4S] cluster serves as cofactor.

This is an uncharacterized protein from Methanocaldococcus jannaschii (strain ATCC 43067 / DSM 2661 / JAL-1 / JCM 10045 / NBRC 100440) (Methanococcus jannaschii).